Here is a 192-residue protein sequence, read N- to C-terminus: Lipid A acyltransferase PagP (192 aa).

The signal sequence occupies residues 1 to 29 (MVVNVVIVAKKYFLFITLLIIQVSLPAHA). Catalysis depends on residues His64, Asp107, and Ser108.

Belongs to the lipid A palmitoyltransferase family. As to quaternary structure, homodimer.

It is found in the cell outer membrane. The catalysed reaction is a lipid A + a 1,2-diacyl-sn-glycero-3-phosphocholine = a hepta-acyl lipid A + a 2-acyl-sn-glycero-3-phosphocholine. The enzyme catalyses a lipid IVA + a 1,2-diacyl-sn-glycero-3-phosphocholine = a lipid IVB + a 2-acyl-sn-glycero-3-phosphocholine. It carries out the reaction a lipid IIA + a 1,2-diacyl-sn-glycero-3-phosphocholine = a lipid IIB + a 2-acyl-sn-glycero-3-phosphocholine. In terms of biological role, transfers a fatty acid residue from the sn-1 position of a phospholipid to the N-linked hydroxyfatty acid chain on the proximal unit of lipid A or its precursors. This is Lipid A acyltransferase PagP from Citrobacter rodentium (strain ICC168) (Citrobacter freundii biotype 4280).